The sequence spans 952 residues: Ubiquitin carboxyl-terminal hydrolase 15 (952 aa).

The residue at position 2 (alanine 2) is an N-acetylalanine. The interval 2-223 (AEGGAADLDI…KNEDGTWPRG (222 aa)) is mediates interaction with SART3. The DUSP domain maps to 7 to 118 (ADLDIQRSDI…GQEPIARKVV (112 aa)). Residue threonine 226 is modified to Phosphothreonine. In terms of domain architecture, USP spans 260 to 904 (CGLSNLGNTC…AAYVLFYQRQ (645 aa)). Cysteine 269 (nucleophile) is an active-site residue. Threonine 573 is subject to Phosphothreonine. The segment at 598–666 (TEGSLHCCKD…GDNDSENGLC (69 aa)) is disordered. Residues 627–644 (METDEPDDESSQDQELPS) are compositionally biased toward acidic residues. Histidine 862 serves as the catalytic Proton acceptor. The tract at residues 923–952 (SAATGIPLESDEDSNDNDNDIENENCMHTN) is disordered. Positions 931-945 (ESDEDSNDNDNDIEN) are enriched in acidic residues. A phosphoserine mark is found at serine 932 and serine 936.

Belongs to the peptidase C19 family. In terms of assembly, a homodimer structure has been reported; however it is unclear whether the protein form a homodimer in vivo. Identified in a complex with the COP9 signalosome complex (CSN). Interacts with SMAD1, SMAD2 and SMAD3; the interaction is direct. Forms a complex with SMURF2 and SMAD7. Interacts with TGFBR1. Interacts with SART3; the interaction is direct. May interact with RNF20 and RNF40. May interact with PRKN. Interacts with INCA1. Post-translationally, phosphorylated. Phosphorylation protects against ubiquitination and subsequent degradation by the proteasome. Ubiquitinated, leading to degradation by the proteasome.

Its subcellular location is the cytoplasm. The protein localises to the nucleus. The protein resides in the mitochondrion. It carries out the reaction Thiol-dependent hydrolysis of ester, thioester, amide, peptide and isopeptide bonds formed by the C-terminal Gly of ubiquitin (a 76-residue protein attached to proteins as an intracellular targeting signal).. In terms of biological role, hydrolase that removes conjugated ubiquitin from target proteins and regulates various pathways such as the TGF-beta receptor signaling, NF-kappa-B and RNF41/NRDP1-PRKN pathways. Acts as a key regulator of TGF-beta receptor signaling pathway, but the precise mechanism is still unclear: according to a report, acts by promoting deubiquitination of monoubiquitinated R-SMADs (SMAD1, SMAD2 and/or SMAD3), thereby alleviating inhibition of R-SMADs and promoting activation of TGF-beta target genes. According to another reports, regulates the TGF-beta receptor signaling pathway by mediating deubiquitination and stabilization of TGFBR1, leading to an enhanced TGF-beta signal. Able to mediate deubiquitination of monoubiquitinated substrates, 'Lys-27'-, 'Lys-48'- and 'Lys-63'-linked polyubiquitin chains. May also regulate gene expression and/or DNA repair through the deubiquitination of histone H2B. Acts as an inhibitor of mitophagy by counteracting the action of parkin (PRKN): hydrolyzes cleavage of 'Lys-48'- and 'Lys-63'-linked polyubiquitin chains attached by parkin on target proteins such as MFN2, thereby reducing parkin's ability to drive mitophagy. Acts as an associated component of COP9 signalosome complex (CSN) and regulates different pathways via this association: regulates NF-kappa-B by mediating deubiquitination of NFKBIA and deubiquitinates substrates bound to VCP. Involved in endosome organization by mediating deubiquitination of SQSTM1: ubiquitinated SQSTM1 forms a molecular bridge that restrains cognate vesicles in the perinuclear region and its deubiquitination releases target vesicles for fast transport into the cell periphery. Acts as a negative regulator of antifungal immunity by mediating 'Lys-27'-linked deubiquitination of CARD9, thereby inactivating CARD9. The chain is Ubiquitin carboxyl-terminal hydrolase 15 (USP15) from Bos taurus (Bovine).